We begin with the raw amino-acid sequence, 448 residues long: Methionine aminopeptidase 2-1 (448 aa).

Residues 1 to 83 form a disordered region; that stretch reads MAAQVIPELQ…TQKAQTEPPR (83 aa). The span at 32–48 shows a compositional bias: acidic residues; the sequence is ENEDGDSEDDNGDDQGA. Basic residues predominate over residues 59-73; the sequence is AKKKKKKKPKKKKKD. Histidine 198 serves as a coordination point for substrate. A divalent metal cation contacts are provided by aspartate 218, aspartate 229, and histidine 298. Histidine 306 provides a ligand contact to substrate. The a divalent metal cation site is built by glutamate 334 and glutamate 429.

It belongs to the peptidase M24A family. Methionine aminopeptidase eukaryotic type 2 subfamily. Requires Co(2+) as cofactor. Zn(2+) is required as a cofactor. The cofactor is Mn(2+). It depends on Fe(2+) as a cofactor.

Its subcellular location is the cytoplasm. It carries out the reaction Release of N-terminal amino acids, preferentially methionine, from peptides and arylamides.. Functionally, cotranslationally removes the N-terminal methionine from nascent proteins. The N-terminal methionine is often cleaved when the second residue in the primary sequence is small and uncharged (Met-Ala-, Cys, Gly, Pro, Ser, Thr, or Val). In Ajellomyces capsulatus (strain G186AR / H82 / ATCC MYA-2454 / RMSCC 2432) (Darling's disease fungus), this protein is Methionine aminopeptidase 2-1.